A 225-amino-acid chain; its full sequence is Uracil-DNA glycosylase (225 aa).

D65 (proton acceptor) is an active-site residue.

The protein belongs to the uracil-DNA glycosylase (UDG) superfamily. UNG family.

It localises to the cytoplasm. It catalyses the reaction Hydrolyzes single-stranded DNA or mismatched double-stranded DNA and polynucleotides, releasing free uracil.. In terms of biological role, excises uracil residues from the DNA which can arise as a result of misincorporation of dUMP residues by DNA polymerase or due to deamination of cytosine. The protein is Uracil-DNA glycosylase of Clostridium perfringens (strain 13 / Type A).